A 251-amino-acid chain; its full sequence is tRNA pseudouridine synthase A (251 aa).

The Nucleophile role is filled by Asp-53. Tyr-110 lines the substrate pocket.

This sequence belongs to the tRNA pseudouridine synthase TruA family. In terms of assembly, homodimer.

The enzyme catalyses uridine(38/39/40) in tRNA = pseudouridine(38/39/40) in tRNA. Formation of pseudouridine at positions 38, 39 and 40 in the anticodon stem and loop of transfer RNAs. The protein is tRNA pseudouridine synthase A of Mesoplasma florum (strain ATCC 33453 / NBRC 100688 / NCTC 11704 / L1) (Acholeplasma florum).